The primary structure comprises 316 residues: Large ribosomal subunit protein uL4 (316 aa).

A large ribosomal subunit protein uL4 region spans residues 1 to 211; that stretch reads MASCVVKNWQ…EQLKARWGSD (211 aa). 2 disordered regions span residues 44–76 and 231–316; these read ARQG…ARAG and EDQA…ESDD. Basic residues predominate over residues 60 to 71; sequence GGRKPWKQKGTG. The segment at 212 to 316 is unknown; the sequence is AAPAVLETPS…TAPAEEESDD (105 aa). The span at 255–270 shows a compositional bias: low complexity; that stretch reads QTPAQPEAQENQAALQ. 2 stretches are compositionally biased toward acidic residues: residues 281-291 and 301-316; these read EQTEEPQDPAE and TVEE…ESDD.

It belongs to the universal ribosomal protein uL4 family. In terms of assembly, part of the 50S ribosomal subunit.

In terms of biological role, one of the primary rRNA binding proteins, this protein initially binds near the 5'-end of the 23S rRNA. It is important during the early stages of 50S assembly. It makes multiple contacts with different domains of the 23S rRNA in the assembled 50S subunit and ribosome. Forms part of the polypeptide exit tunnel. This Synechococcus sp. (strain JA-2-3B'a(2-13)) (Cyanobacteria bacterium Yellowstone B-Prime) protein is Large ribosomal subunit protein uL4.